Consider the following 243-residue polypeptide: MGTPETSREPCPDRILDDIGGAFGMGAVGGSAFHFIKGTYNSPKGSRFVGGTQSVSMNAPRTGGSFAVWGGLFSTFDCTMVYLRQKEDPWNSIIAGAATGGFLSMRQGAGAASRSAIFGGVLLALIEGAGIMLNKVLAQPQNMMMEDPGMQGMPGMQGMQGMPGMPGMQGMPGMQGMQMGQMQSQAQIRSESQNQNTASSSSSSSWFGGLFDKKKEEVQPGSESKTEVLESFDAPPVPSFEFK.

A run of 4 helical transmembrane segments spans residues 19–36, 66–83, 90–109, and 115–137; these read IGGA…FHFI, FAVW…MVYL, WNSI…RQGA, and SAIF…NKVL. 10 repeat units span residues 149–151, 152–154, 155–157, 158–160, 161–163, 164–166, 167–169, 170–172, 173–175, and 176–178. The interval 149 to 178 is 10 X approximate repeats GMQ/P; that stretch reads GMQGMPGMQGMQGMPGMPGMQGMPGMQGMQ. Positions 166-183 are enriched in low complexity; that stretch reads PGMQGMPGMQGMQMGQMQ. Residues 166 to 243 form a disordered region; it reads PGMQGMPGMQ…APPVPSFEFK (78 aa). The segment covering 184 to 198 has biased composition (polar residues); that stretch reads SQAQIRSESQNQNTA. The segment covering 211-228 has biased composition (basic and acidic residues); that stretch reads FDKKKEEVQPGSESKTEV.

It belongs to the Tim17/Tim22/Tim23 family. Component of the TIM17:23 complex at least composed of TIM23, TIM17 and TIM50. The complex interacts with the TIM44 component of the PAM complex. Interacts with TIM23-2. As to expression, expressed in roots, flowers, leaves and young cotyledons.

It is found in the mitochondrion inner membrane. The protein resides in the mitochondrion outer membrane. In terms of biological role, essential component of the TIM17:23 complex, a complex that mediates the translocation of transit peptide-containing proteins across the mitochondrial inner membrane. Links the inner and outer membranes. In Arabidopsis thaliana (Mouse-ear cress), this protein is Mitochondrial import inner membrane translocase subunit TIM17-2 (TIM17-2).